The chain runs to 99 residues: MSKITNEQVKHVAHLARLEITEEEATKFSAQLEAILNFADQLEEVDTEGVEPTFHVLDLQNVLREDVAETSLTQEEILKNAAHTEDGQFKVPSILGGGE.

This sequence belongs to the GatC family. In terms of assembly, heterotrimer of A, B and C subunits.

The catalysed reaction is L-glutamyl-tRNA(Gln) + L-glutamine + ATP + H2O = L-glutaminyl-tRNA(Gln) + L-glutamate + ADP + phosphate + H(+). It catalyses the reaction L-aspartyl-tRNA(Asn) + L-glutamine + ATP + H2O = L-asparaginyl-tRNA(Asn) + L-glutamate + ADP + phosphate + 2 H(+). Allows the formation of correctly charged Asn-tRNA(Asn) or Gln-tRNA(Gln) through the transamidation of misacylated Asp-tRNA(Asn) or Glu-tRNA(Gln) in organisms which lack either or both of asparaginyl-tRNA or glutaminyl-tRNA synthetases. The reaction takes place in the presence of glutamine and ATP through an activated phospho-Asp-tRNA(Asn) or phospho-Glu-tRNA(Gln). This Macrococcus caseolyticus (strain JCSC5402) (Macrococcoides caseolyticum) protein is Aspartyl/glutamyl-tRNA(Asn/Gln) amidotransferase subunit C.